An 818-amino-acid chain; its full sequence is MKKQFNRMRQLANQTVGRAEKTEVLSEDLLQVEKRLELVKQVSHSTHKKLTACLQGQQGAEADKRSKKLPLTTLAQCLMEGSAILGDDTLLGKMLKLCGETEDKLAQELIHFELQVERDVIEPLFLLAEVEIPNIQKQRKHLAKLVLDMDSSRTRWQQTSKSSGLSSSLQPAGAKADALREEMEEAANRVEICRDQLSADMYSFVAKEIDYANYFQTLIEVQAEYHRKSLTLLQAVLPQIKAQQEAWVEKPSFGKPLEEHLTISGREIAFPIEACVTMLLECGMQEEGLFRVAPSASKLKKLKAALDCCVVDVQEYSADPHAIAGALKSYLRELPEPLMTFELYDEWIQASNVQEQDKKLQALWNACEKLPKANHNNIRYLIKFLSKLSEYQDVNKMTPSNMAIVLGPNLLWPQAEGNITEMMTTVSLQIVGIIEPIIQHADWFFPGEIEFNITGNYGSPVHVNHNANYSSMPSPDMDPADRRQPEQARRPLSVATDNMMLEFYKKDGLRKIQSMGVRVMDTNWVARRGSSAGRKVSCAPPSMQPPAPPAELAAPLPSPLPEQPLDSPAAPALSPSGLGLQPGPERTSTTKSKELSPGSAQKGSPGSSQGTACAGTQPGAQPGAQPGASPSPSQPPADQSPHTLRKVSKKLAPIPPKVPFGQPGAMADQSAGQPSPVSLSPTPPSTPSPYGLSYPQGYSLASGQLSPAAAPPLASPSVFTSTLSKSRPTPKPRQRPTLPPPQPPTVNLSASSPQSTEAPMLDGMSPGESMSTDLVHFDIPSIHIELGSTLRLSPLEHMRRHSVTDKRDSEEESESTAL.

In terms of domain architecture, BAR spans 14-249 (QTVGRAEKTE…IKAQQEAWVE (236 aa)). A Rho-GAP domain is found at 255–445 (KPLEEHLTIS…PIIQHADWFF (191 aa)). Disordered stretches follow at residues 467–493 (ANYSSMPSPDMDPADRRQPEQARRPLS), 530–772 (SSAG…SMST), and 789–818 (TLRLSPLEHMRRHSVTDKRDSEEESESTAL). The segment covering 479-489 (PADRRQPEQAR) has biased composition (basic and acidic residues). Residue Ser493 is modified to Phosphoserine. A compositionally biased stretch (low complexity) spans 563–579 (QPLDSPAAPALSPSGLG). Residues 598-611 (GSAQKGSPGSSQGT) are compositionally biased toward polar residues. Low complexity-rich tracts occupy residues 614–641 (AGTQPGAQPGAQPGASPSPSQPPADQSP) and 688–708 (SPYGLSYPQGYSLASGQLSPA). The interaction with BST2 stretch occupies residues 731–818 (KPRQRPTLPP…SEEESESTAL (88 aa)). The segment covering 746–757 (VNLSASSPQSTE) has biased composition (polar residues). A PDZ-binding motif is present at residues 764-767 (MSPG). The segment covering 794–809 (PLEHMRRHSVTDKRDS) has biased composition (basic and acidic residues). Ser809 carries the phosphoserine modification. The short motif at 815–818 (STAL) is the PDZ-binding element.

In terms of assembly, interacts with BST2 (via cytoplasmic domain). Interacts (probably via PDZ-binding motif) with SHANK3 (via PDZ domain); the interaction takes place in dendritic spines and promotes GRIA1 exocytosis. Highly expressed in brain. Expressed at weak level in other tissues.

It is found in the cell projection. The protein localises to the dendritic spine. It localises to the recycling endosome. The protein resides in the presynapse. Its subcellular location is the dendrite. GTPase-activating protein (GAP) that stimulates the GTPase activity of Rho-type GTPases. Thereby, controls Rho-type GTPases cycling between their active GTP-bound and inactive GDP-bound states. Acts as a GAP at least for CDC42 and RAC1. In neurons, is involved in dendritic spine formation and synaptic plasticity in a specific RAC1-GAP activity. Limits the initiation of exploratory dendritic filopodia. Recruited to actin-patches that seed filopodia, binds specifically to plasma membrane sections that are deformed inward by acto-myosin mediated contractile forces. Acts through GAP activity on RAC1 to reduce actin polymerization necessary for filopodia formation. In association with SHANK3, promotes GRIA1 exocytosis from recycling endosomes and spine morphological changes associated to long-term potentiation. This is Rho GTPase-activating protein 44 from Homo sapiens (Human).